The primary structure comprises 347 residues: Probable arabinogalactan endo-beta-1,4-galactanase A (347 aa).

The N-terminal stretch at 1–16 (MLFSYLLATLPLLANA) is a signal peptide. Residue Glu-150 is the Proton donor of the active site. Glu-260 acts as the Nucleophile in catalysis.

It belongs to the glycosyl hydrolase 53 family.

It localises to the secreted. It catalyses the reaction The enzyme specifically hydrolyzes (1-&gt;4)-beta-D-galactosidic linkages in type I arabinogalactans.. Functionally, endogalactanase involved in the degradation of plant cell wall polysaccharides, and more particularly of hairy regions of pectin. The sequence is that of Probable arabinogalactan endo-beta-1,4-galactanase A (galA) from Aspergillus flavus (strain ATCC 200026 / FGSC A1120 / IAM 13836 / NRRL 3357 / JCM 12722 / SRRC 167).